Reading from the N-terminus, the 126-residue chain is Histone H2B type F-S (126 aa).

A compositionally biased stretch (low complexity) spans 1–12; the sequence is MPEPAKSAPAPK. Residues 1–36 are disordered; the sequence is MPEPAKSAPAPKKGSKKAVTKAQKKDGRKRKRSRKE. Pro2 is modified (N-acetylproline). Glu3 carries the post-translational modification ADP-ribosyl glutamic acid. N6-(2-hydroxyisobutyryl)lysine; alternate is present on Lys6. At Lys6 the chain carries N6-(beta-hydroxybutyryl)lysine; alternate. The residue at position 6 (Lys6) is an N6-acetyllysine; alternate. N6-butyryllysine; alternate is present on Lys6. Residue Lys6 is modified to N6-crotonyllysine; alternate. Lys6 is modified (N6-lactoyllysine; alternate). Residue Lys6 forms a Glycyl lysine isopeptide (Lys-Gly) (interchain with G-Cter in SUMO2); alternate linkage. The residue at position 7 (Ser7) is an ADP-ribosylserine. Lys12 is modified (N6-(beta-hydroxybutyryl)lysine; alternate). N6-acetyllysine; alternate is present on residues Lys12 and Lys13. N6-crotonyllysine; alternate occurs at positions 12 and 13. Lys12 is modified (N6-lactoyllysine; alternate). N6-(2-hydroxyisobutyryl)lysine; alternate is present on Lys13. A Phosphoserine; by STK4/MST1 modification is found at Ser15. N6-acetyllysine; alternate occurs at positions 16, 17, 21, and 24. N6-crotonyllysine; alternate occurs at positions 16, 17, 21, and 24. N6-lactoyllysine; alternate is present on residues Lys16, Lys17, Lys21, and Lys24. Lys17 and Lys21 each carry N6-(beta-hydroxybutyryl)lysine; alternate. Residue Lys17 is modified to N6-glutaryllysine; alternate. N6-(2-hydroxyisobutyryl)lysine; alternate occurs at positions 21 and 24. Lys21 bears the N6-butyryllysine; alternate mark. Residue Lys21 forms a Glycyl lysine isopeptide (Lys-Gly) (interchain with G-Cter in SUMO2); alternate linkage. At Lys25 the chain carries N6-(2-hydroxyisobutyryl)lysine. Lys35 is subject to N6-(2-hydroxyisobutyryl)lysine; alternate. N6-(beta-hydroxybutyryl)lysine; alternate is present on Lys35. Lys35 bears the N6-crotonyllysine; alternate mark. Lys35 carries the N6-glutaryllysine; alternate modification. The residue at position 35 (Lys35) is an N6-succinyllysine; alternate. A Glycyl lysine isopeptide (Lys-Gly) (interchain with G-Cter in ubiquitin); alternate cross-link involves residue Lys35. At Glu36 the chain carries PolyADP-ribosyl glutamic acid. At Ser37 the chain carries Phosphoserine; by AMPK. Residues Lys44, Lys47, and Lys58 each carry the N6-(2-hydroxyisobutyryl)lysine; alternate modification. Lys44 is subject to N6-lactoyllysine; alternate. Lys44 and Lys47 each carry N6-glutaryllysine; alternate. At Lys47 the chain carries N6-methyllysine; alternate. Lys58 is subject to N6,N6-dimethyllysine; alternate. Residue Arg80 is modified to Dimethylated arginine. Position 86 is an N6-(2-hydroxyisobutyryl)lysine; alternate (Lys86). N6-(beta-hydroxybutyryl)lysine; alternate is present on Lys86. N6-acetyllysine; alternate is present on Lys86. Position 86 is an N6-lactoyllysine; alternate (Lys86). N6,N6,N6-trimethyllysine; alternate is present on Lys86. An omega-N-methylarginine mark is found at Arg87 and Arg93. Lys109 carries the post-translational modification N6-(2-hydroxyisobutyryl)lysine; alternate. At Lys109 the chain carries N6-lactoyllysine; alternate. An N6-glutaryllysine; alternate modification is found at Lys109. The residue at position 109 (Lys109) is an N6-methyllysine; alternate. Ser113 carries O-linked (GlcNAc) serine glycosylation. A Phosphothreonine modification is found at Thr116. N6-(2-hydroxyisobutyryl)lysine; alternate occurs at positions 117 and 121. N6-(beta-hydroxybutyryl)lysine; alternate occurs at positions 117 and 121. Residues Lys117 and Lys121 each carry the N6-lactoyllysine; alternate modification. N6-glutaryllysine; alternate occurs at positions 117 and 121. An N6-succinyllysine; alternate mark is found at Lys117 and Lys121. Residue Lys117 is modified to N6-malonyllysine; alternate. Lys117 carries the N6-methylated lysine; alternate modification. Lys121 is covalently cross-linked (Glycyl lysine isopeptide (Lys-Gly) (interchain with G-Cter in ubiquitin); alternate).

It belongs to the histone H2B family. In terms of assembly, the nucleosome is a histone octamer containing two molecules each of H2A, H2B, H3 and H4 assembled in one H3-H4 heterotetramer and two H2A-H2B heterodimers. The octamer wraps approximately 147 bp of DNA. Post-translationally, monoubiquitination at Lys-35 (H2BK34Ub) by the MSL1/MSL2 dimer is required for histone H3 'Lys-4' (H3K4me) and 'Lys-79' (H3K79me) methylation and transcription activation at specific gene loci, such as HOXA9 and MEIS1 loci. Similarly, monoubiquitination at Lys-121 (H2BK120Ub) by the RNF20/40 complex gives a specific tag for epigenetic transcriptional activation and is also prerequisite for histone H3 'Lys-4' and 'Lys-79' methylation. It also functions cooperatively with the FACT dimer to stimulate elongation by RNA polymerase II. H2BK120Ub also acts as a regulator of mRNA splicing: deubiquitination by USP49 is required for efficient cotranscriptional splicing of a large set of exons. In terms of processing, phosphorylation at Ser-37 (H2BS36ph) by AMPK in response to stress promotes transcription. Phosphorylated on Ser-15 (H2BS14ph) by STK4/MST1 during apoptosis; which facilitates apoptotic chromatin condensation. Also phosphorylated on Ser-15 in response to DNA double strand breaks (DSBs), and in correlation with somatic hypermutation and immunoglobulin class-switch recombination. GlcNAcylation at Ser-113 promotes monoubiquitination of Lys-121. It fluctuates in response to extracellular glucose, and associates with transcribed genes. Post-translationally, ADP-ribosylated by PARP1 or PARP2 on Ser-7 (H2BS6ADPr) in response to DNA damage. H2BS6ADPr promotes recruitment of CHD1L. Mono-ADP-ribosylated on Glu-3 (H2BE2ADPr) by PARP3 in response to single-strand breaks. Poly ADP-ribosylation on Glu-36 (H2BE35ADPr) by PARP1 regulates adipogenesis: it inhibits phosphorylation at Ser-37 (H2BS36ph), thereby blocking expression of pro-adipogenetic genes. In terms of processing, crotonylation (Kcr) is specifically present in male germ cells and marks testis-specific genes in post-meiotic cells, including X-linked genes that escape sex chromosome inactivation in haploid cells. Crotonylation marks active promoters and enhancers and confers resistance to transcriptional repressors. It is also associated with post-meiotically activated genes on autosomes. Lactylated in macrophages by EP300/P300 by using lactoyl-CoA directly derived from endogenous or exogenous lactate, leading to stimulates gene transcription.

Its subcellular location is the nucleus. The protein localises to the chromosome. Functionally, core component of nucleosome. Nucleosomes wrap and compact DNA into chromatin, limiting DNA accessibility to the cellular machineries which require DNA as a template. Histones thereby play a central role in transcription regulation, DNA repair, DNA replication and chromosomal stability. DNA accessibility is regulated via a complex set of post-translational modifications of histones, also called histone code, and nucleosome remodeling. In terms of biological role, has broad antibacterial activity. May contribute to the formation of the functional antimicrobial barrier of the colonic epithelium, and to the bactericidal activity of amniotic fluid. This Homo sapiens (Human) protein is Histone H2B type F-S.